Here is a 147-residue protein sequence, read N- to C-terminus: Hemoglobin subunit beta-2 (147 aa).

Val-2 is modified (N-acetylvaline). The Globin domain occupies 3-147; the sequence is HLTDAEKATV…VASALAHKYH (145 aa). Ser-13 is subject to Phosphoserine. The residue at position 18 (Lys-18) is an N6-succinyllysine. Residues Ser-51 and Ser-53 each carry the phosphoserine modification. 2 residues coordinate heme b: His-64 and His-93. Arg-105 is subject to Asymmetric dimethylarginine. Thr-124 is subject to Phosphothreonine. Position 126 is a phosphoserine; in variant Ser-126 (Cys-126).

The protein belongs to the globin family. Heterotetramer of two alpha chains and two beta chains. Red blood cells.

In terms of biological role, involved in oxygen transport from the lung to the various peripheral tissues. The chain is Hemoglobin subunit beta-2 from Rattus norvegicus (Rat).